The chain runs to 431 residues: Beclin-2 (431 aa).

Residues 17 to 74 form a disordered region; sequence LSGSSESRSLPAAPAPTSGQAEPGDTREPGVTTREVTDAEEQQDGASSRSPPGDGSVS. The stretch at 125-248 forms a coiled coil; the sequence is LLEQLDIQLA…ARVQRDRLKE (124 aa). The segment at 173 to 243 is required for homodimer formation; it reads EARLVQELED…NQLQYARVQR (71 aa).

The protein belongs to the beclin family. In terms of assembly, homodimer (via coiled-coil domain). Interacts (via coiled-coil domain) with ATG14 (via coiled-coil domain); this interaction is tighter than BECN2 self-association. Interacts with AMBRA1, UVRAG and PIK3C3/VPS34; these interactions are not disrupted by starvation. Does not interact with RUBCN. Interacts (via N-terminus) with GPRASP1/GASP1; the interaction is direct. In terms of tissue distribution, present in fetal and adult brain (at protein level).

The protein resides in the cytoplasm. Involved in 2 distinct lysosomal degradation pathways: acts as a regulator of autophagy and as a regulator of G-protein coupled receptors turnover. Regulates degradation in lysosomes of a variety of G-protein coupled receptors via its interaction with GPRASP1/GASP1. In Homo sapiens (Human), this protein is Beclin-2.